Consider the following 366-residue polypeptide: ADP-ribosylarginine hydrolase Tri1 (366 aa).

Residues 1–65 (MIDLREDTWT…LNTPPCLIPE (65 aa)) form an N-terminal extension region. Positions 74–366 (GALVGLAIGD…LFYMAPEEDF (293 aa)) are ADP-ribosyl hydrolase domain. The Mg(2+) site is built by Thr116, Asp117, Asp118, Asp161, and Asp317.

Belongs to the ADP-ribosylglycohydrolase family. Forms a stable complex with cognate effector protein Tre1-Sp. The cofactor is Mg(2+).

It catalyses the reaction N(omega)-(ADP-D-ribosyl)-L-arginyl-[protein] + H2O = ADP-D-ribose + L-arginyl-[protein]. Its function is as follows. Immunity component of a contact-dependent interbacterial competition system (also called effector-immunity systems). Acts as an arginine mono-ADP-ribosylhydrolase, mediating the removal of mono-ADP-ribose attached to arginine residues on proteins. De-ADP-ribosylates FtsZ, is able to act on other proteins as well. Neutralizes the toxic activity of cognate toxin Tre1-Sp. Expression of this protein alone in E.coli partially protects the cells against competition by wild-type S.proteamaculans. Neutralizes Tre1-Sp both by occluding its active site via its N-terminal extension and by hydrolyzing the ADP-ribosyl moiety from FtsZ; the 2 activities are dissociable by mutagenesis. The protein is ADP-ribosylarginine hydrolase Tri1 of Serratia proteamaculans (strain 568).